We begin with the raw amino-acid sequence, 429 residues long: Argininosuccinate lyase (429 aa).

The protein belongs to the lyase 1 family. Argininosuccinate lyase subfamily.

It localises to the cytoplasm. The enzyme catalyses 2-(N(omega)-L-arginino)succinate = fumarate + L-arginine. Its pathway is amino-acid biosynthesis; L-arginine biosynthesis; L-arginine from L-ornithine and carbamoyl phosphate: step 3/3. The polypeptide is Argininosuccinate lyase (Pyrobaculum aerophilum (strain ATCC 51768 / DSM 7523 / JCM 9630 / CIP 104966 / NBRC 100827 / IM2)).